We begin with the raw amino-acid sequence, 759 residues long: Protein zyg-11 homolog A (759 aa).

3 LRR repeats span residues 204 to 227 (LPRL…LTCK), 235 to 260 (MHYL…CLLH), and 490 to 513 (VTSI…FMAV).

It belongs to the zyg-11 family.

In terms of biological role, probably acts as a target recruitment subunit in an E3 ubiquitin ligase complex ZYGA-CUL2-elongin BC. The sequence is that of Protein zyg-11 homolog A (ZYG11A) from Homo sapiens (Human).